Reading from the N-terminus, the 467-residue chain is Chromosomal replication initiator protein DnaA (467 aa).

Residues 1 to 79 (MTELDQFWPA…GELPVELRLG (79 aa)) form a domain I, interacts with DnaA modulators region. The tract at residues 79 to 129 (GAPTARPAAPVAGNSQPKAKEPAKAAASAPAAPSPAKQAAVKAIGGSHEST) is domain II. The interval 84–126 (RPAAPVAGNSQPKAKEPAKAAASAPAAPSPAKQAAVKAIGGSH) is disordered. Low complexity predominate over residues 102 to 121 (KAAASAPAAPSPAKQAAVKA). The segment at 130 to 347 (RLNPSFTFDT…GALKRVVAYA (218 aa)) is domain III, AAA+ region. Residues G175, G177, K178, and T179 each coordinate ATP. Residues 348 to 467 (RFTSQNITLE…YEALLSMLRN (120 aa)) form a domain IV, binds dsDNA region.

Belongs to the DnaA family. Oligomerizes as a right-handed, spiral filament on DNA at oriC.

The protein resides in the cytoplasm. In terms of biological role, plays an essential role in the initiation and regulation of chromosomal replication. ATP-DnaA binds to the origin of replication (oriC) to initiate formation of the DNA replication initiation complex once per cell cycle. Binds the DnaA box (a 9 base pair repeat at the origin) and separates the double-stranded (ds)DNA. Forms a right-handed helical filament on oriC DNA; dsDNA binds to the exterior of the filament while single-stranded (ss)DNA is stabiized in the filament's interior. The ATP-DnaA-oriC complex binds and stabilizes one strand of the AT-rich DNA unwinding element (DUE), permitting loading of DNA polymerase. After initiation quickly degrades to an ADP-DnaA complex that is not apt for DNA replication. Binds acidic phospholipids. This chain is Chromosomal replication initiator protein DnaA, found in Chromobacterium violaceum (strain ATCC 12472 / DSM 30191 / JCM 1249 / CCUG 213 / NBRC 12614 / NCIMB 9131 / NCTC 9757 / MK).